A 182-amino-acid chain; its full sequence is ATP synthase subunit delta (182 aa).

It belongs to the ATPase delta chain family. In terms of assembly, F-type ATPases have 2 components, F(1) - the catalytic core - and F(0) - the membrane proton channel. F(1) has five subunits: alpha(3), beta(3), gamma(1), delta(1), epsilon(1). CF(0) has four main subunits: a(1), b(1), b'(1) and c(10-14). The alpha and beta chains form an alternating ring which encloses part of the gamma chain. F(1) is attached to F(0) by a central stalk formed by the gamma and epsilon chains, while a peripheral stalk is formed by the delta, b and b' chains.

It localises to the cellular thylakoid membrane. Functionally, f(1)F(0) ATP synthase produces ATP from ADP in the presence of a proton or sodium gradient. F-type ATPases consist of two structural domains, F(1) containing the extramembraneous catalytic core and F(0) containing the membrane proton channel, linked together by a central stalk and a peripheral stalk. During catalysis, ATP synthesis in the catalytic domain of F(1) is coupled via a rotary mechanism of the central stalk subunits to proton translocation. Its function is as follows. This protein is part of the stalk that links CF(0) to CF(1). It either transmits conformational changes from CF(0) to CF(1) or is implicated in proton conduction. In Synechococcus sp. (strain JA-3-3Ab) (Cyanobacteria bacterium Yellowstone A-Prime), this protein is ATP synthase subunit delta.